We begin with the raw amino-acid sequence, 240 residues long: Cilia- and flagella-associated protein 77 (240 aa).

The protein belongs to the CFAP77 family.

The protein resides in the cytoplasm. The protein localises to the cytoskeleton. It is found in the cilium axoneme. It localises to the flagellum axoneme. Microtubule inner protein (MIP) part of the dynein-decorated doublet microtubules (DMTs) in cilia axoneme, which is required for motile cilia beating. The chain is Cilia- and flagella-associated protein 77 from Danio rerio (Zebrafish).